The chain runs to 2008 residues: Histone-lysine N-methyltransferase SETD1B (2008 aa).

A compositionally biased stretch (basic and acidic residues) spans 1–20; that stretch reads MSFREIKAGEKAKHPEDHGK. A disordered region spans residues 1–42; it reads MSFREIKAGEKAKHPEDHGKKQSSSWINGMENSTQASTSVEK. Residues 22–39 are compositionally biased toward polar residues; it reads QSSSWINGMENSTQASTS. One can recognise an RRM domain in the interval 111-199; the sequence is DEFYVGPVPP…NIIHVELDTK (89 aa). 9 disordered regions span residues 249 to 390, 402 to 652, 682 to 725, 950 to 1172, 1309 to 1328, 1345 to 1461, 1563 to 1600, 1674 to 1712, and 1814 to 1842; these read NLSS…SSYK, FPQS…APIT, PPGF…PPLP, RKEP…DKRE, TKLP…PGRE, VPSS…FTPT, VGAS…MYSG, KEEE…PQFR, and EEPP…RRSE. A compositionally biased stretch (low complexity) spans 251–264; the sequence is SSVGSSVTPNSSTP. 5 stretches are compositionally biased toward polar residues: residues 265-293, 301-315, 360-381, 405-414, and 456-491; these read FSHD…QGTP, PFSQ…QTTP, HQFS…TPPL, SEEQPFAQTS, and DSNS…QHNS. The segment covering 492 to 521 has biased composition (basic and acidic residues); sequence LDSRIEMLLKEQRTKLPFLNEHDSDNEVRM. A compositionally biased stretch (low complexity) spans 524–537; the sequence is SPISSSSSQLSPIP. 2 stretches are compositionally biased toward polar residues: residues 540–560 and 582–604; these read GSNS…SSTG and ASLN…QLNR. Basic and acidic residues-rich tracts occupy residues 606–617 and 626–636; these read SKVETLEVKEMV and EKMDESQHSSG. Acidic residues predominate over residues 637–646; sequence EDMEISDDEM. Basic and acidic residues predominate over residues 979–997; it reads ERDRDASDTTSDLSKKDAE. The segment covering 1011–1020 has biased composition (acidic residues); the sequence is LDSEGEEGDE. Residues 1021–1031 show a composition bias toward basic and acidic residues; sequence TSGKEEESSSE. Composition is skewed to acidic residues over residues 1050–1094 and 1105–1149; these read EEEE…EEDA and ESSD…EDQD. Residues 1150–1172 are compositionally biased toward basic and acidic residues; that stretch reads REAMVAETEHEPASHELPDDKRE. Low complexity predominate over residues 1345-1356; it reads VPSSTVPLPSTP. A compositionally biased stretch (basic and acidic residues) spans 1378-1392; it reads SIEEEIPRTPGRDIL. A compositionally biased stretch (low complexity) spans 1418–1427; it reads LTGSSLTLSS. Composition is skewed to basic residues over residues 1577-1587 and 1681-1690; these read LPKRRPGRPRR and KPKRQWRRQK. The span at 1699-1710 shows a compositional bias: pro residues; the sequence is IPSPEYSPPQPQ. A RxxxRR motif motif is present at residues 1840-1845; sequence RSEQRR. Residues 1869-1986 enclose the SET domain; sequence KKLKFCKSHI…VNEEITYDYK (118 aa). Tyrosine 1985 is a binding site for S-adenosyl-L-methionine. Residues 1992 to 2008 form the Post-SET domain; sequence VKIPCLCGSENCRGTLN.

This sequence belongs to the class V-like SAM-binding methyltransferase superfamily. In terms of assembly, component of the SET1B/COMPASS complex.

It is found in the nucleus speckle. It localises to the chromosome. The catalysed reaction is L-lysyl(4)-[histone H3] + 3 S-adenosyl-L-methionine = N(6),N(6),N(6)-trimethyl-L-lysyl(4)-[histone H3] + 3 S-adenosyl-L-homocysteine + 3 H(+). Histone methyltransferase that specifically methylates 'Lys-4' of histone H3, when part of the SET1 histone methyltransferase (HMT) complex, but not if the neighboring 'Lys-9' residue is already methylated. H3 'Lys-4' methylation represents a specific tag for epigenetic transcriptional activation. In Gallus gallus (Chicken), this protein is Histone-lysine N-methyltransferase SETD1B (SETD1B).